The primary structure comprises 285 residues: Diaminopimelate epimerase (285 aa).

Residues asparagine 14 and asparagine 67 each coordinate substrate. Catalysis depends on cysteine 76, which acts as the Proton donor. Substrate contacts are provided by residues 77–78 (GN), asparagine 166, asparagine 199, and 217–218 (ER). Cysteine 226 (proton acceptor) is an active-site residue. Residue 227–228 (GT) coordinates substrate.

This sequence belongs to the diaminopimelate epimerase family. As to quaternary structure, homodimer.

It localises to the cytoplasm. The catalysed reaction is (2S,6S)-2,6-diaminopimelate = meso-2,6-diaminopimelate. Its pathway is amino-acid biosynthesis; L-lysine biosynthesis via DAP pathway; DL-2,6-diaminopimelate from LL-2,6-diaminopimelate: step 1/1. In terms of biological role, catalyzes the stereoinversion of LL-2,6-diaminopimelate (L,L-DAP) to meso-diaminopimelate (meso-DAP), a precursor of L-lysine and an essential component of the bacterial peptidoglycan. The chain is Diaminopimelate epimerase from Bacillus licheniformis (strain ATCC 14580 / DSM 13 / JCM 2505 / CCUG 7422 / NBRC 12200 / NCIMB 9375 / NCTC 10341 / NRRL NRS-1264 / Gibson 46).